The following is an 87-amino-acid chain: Large ribosomal subunit protein bL27 (87 aa).

The disordered stretch occupies residues 1 to 26; it reads MAHKKGTGSTRNGRDSNSKRLGVKAY.

The protein belongs to the bacterial ribosomal protein bL27 family.

The sequence is that of Large ribosomal subunit protein bL27 from Prochlorococcus marinus (strain SARG / CCMP1375 / SS120).